The sequence spans 156 residues: Small ribosomal subunit protein uS7 (156 aa).

The protein belongs to the universal ribosomal protein uS7 family. As to quaternary structure, part of the 30S ribosomal subunit. Contacts proteins S9 and S11.

Functionally, one of the primary rRNA binding proteins, it binds directly to 16S rRNA where it nucleates assembly of the head domain of the 30S subunit. Is located at the subunit interface close to the decoding center, probably blocks exit of the E-site tRNA. The chain is Small ribosomal subunit protein uS7 from Teredinibacter turnerae (strain ATCC 39867 / T7901).